Reading from the N-terminus, the 320-residue chain is uncharacterized protein (320 aa).

This is an uncharacterized protein from Orgyia pseudotsugata (Douglas-fir tussock moth).